The following is a 330-amino-acid chain: MTLIVTGAAGFIGANIVKALNERGETRIIAVDNLTRADKFKNLVDCEIDDYLDKTEFVERFARGDFGKVRAVFHEGACSDTMETDGRYMMDNNFRYSRAVLDACLAQGTQFLYASSAAIYGGSSRFVEAREFEAPLNVYGYSKFLFDQVIRRVMPSAKSQIAGFRYFNVYGPRESHKGRMASVAFHNFNQFRAEGKVKLFGEYNGYGPGEQTRDFVSVEDVAKVNLHFFDHPQKSGIFNLGTGRAQPFNDIATTVVNTLRALEGQPALTLAEQVEQGLVEYVPFPDALRGKYQCFTQADQTKLRAAGYDAPFLTVQEGVDRYVRWLFGQL.

NADP(+) contacts are provided by residues Phe-11–Ile-12, Asp-32–Asn-33, Lys-39, Lys-54, Glu-75–Ser-79, and Asn-92. Tyr-139 functions as the Proton acceptor in the catalytic mechanism. An NADP(+)-binding site is contributed by Lys-143. Asn-168 provides a ligand contact to substrate. NADP(+) is bound by residues Val-169 and Lys-177. The Proton acceptor role is filled by Lys-177. Substrate contacts are provided by residues Arg-179, His-186, Phe-200–Tyr-203, Arg-213, and Tyr-292.

It belongs to the NAD(P)-dependent epimerase/dehydratase family. HldD subfamily. Homopentamer. It depends on NADP(+) as a cofactor.

It carries out the reaction ADP-D-glycero-beta-D-manno-heptose = ADP-L-glycero-beta-D-manno-heptose. Its pathway is nucleotide-sugar biosynthesis; ADP-L-glycero-beta-D-manno-heptose biosynthesis; ADP-L-glycero-beta-D-manno-heptose from D-glycero-beta-D-manno-heptose 7-phosphate: step 4/4. In terms of biological role, catalyzes the interconversion between ADP-D-glycero-beta-D-manno-heptose and ADP-L-glycero-beta-D-manno-heptose via an epimerization at carbon 6 of the heptose. In Burkholderia mallei (strain NCTC 10247), this protein is ADP-L-glycero-D-manno-heptose-6-epimerase.